The sequence spans 146 residues: Angiogenin (146 aa).

A signal peptide spans 1–24 (MVMGLGLFLLVFMLGLGLTPPTLA). The residue at position 25 (Q25) is a Pyrrolidone carboxylic acid. Residue H37 is the Proton acceptor of the active site. R45 lines the tRNA pocket. 3 disulfide bridges follow: C50/C105, C63/C116, and C81/C131. A Nucleolar localization signal motif is present at residues 55 to 59 (RRRHL). TRNA contacts are provided by C105 and I127. The active-site Proton donor is the H138.

It belongs to the pancreatic ribonuclease family. Homodimer. Interacts with RNH1; inhibiting ANG ribonuclease activity. Interacts with PCNA.

The protein resides in the secreted. The protein localises to the nucleus. It localises to the nucleolus. Its subcellular location is the cytoplasm. It is found in the stress granule. Its activity is regulated as follows. Has weak tRNA ribonuclease activity by itself due to partial autoinhibition by its C-terminus, which folds into a short alpha-helix that partially occludes the substrate-binding site. In absence of stress, the ribonuclease activity is inhibited by RNH1 in the cytoplasm. In response to stress, dissociates from RNH1 in the cytoplasm and associates with cytoplasmic ribosomes with vacant A-sites: ribosomes directly activate the tRNA ribonuclease activity of ANG by refolding the C-terminal alpha-helix. In response to stress, the angiogenic activity of ANG is inhibited by RNH1 in the nucleus. Functionally, secreted ribonuclease that can either promote or restrict cell proliferation of target cells, depending on the context. Endocytosed in target cells via its receptor PLXNB2 and translocates to the cytoplasm or nucleus. Under stress conditions, localizes to the cytoplasm and promotes the assembly of stress granules (SGs): specifically cleaves a subset of tRNAs within anticodon loops to produce tRNA-derived stress-induced fragments (tiRNAs), resulting in translation repression and inhibition of cell proliferation. tiRNas also prevent formation of apoptosome, thereby promoting cell survival. Preferentially cleaves RNAs between a pyrimidine and an adenosine residue, suggesting that it cleaves the anticodon loop of tRNA(Ala) (32-UUAGCAU-38) after positions 33 and 36. Cleaves a subset of tRNAs, including tRNA(Ala), tRNA(Glu), tRNA(Gly), tRNA(Lys), tRNA(Val), tRNA(His), tRNA(Asp) and tRNA(Sec). Under growth conditions and in differentiated cells, translocates to the nucleus and stimulates ribosomal RNA (rRNA) transcription, including that containing the initiation site sequences of 45S rRNA, thereby promoting cell growth and proliferation. Angiogenin induces vascularization of normal and malignant tissues via its ability to promote rRNA transcription. Involved in hematopoietic stem and progenitor cell (HSPC) growth and survival by promoting rRNA transcription in growth conditions and inhibiting translation in response to stress, respectively. Mediates the crosstalk between myeloid and intestinal epithelial cells to protect the intestinal epithelial barrier integrity: secreted by myeloid cells and promotes intestinal epithelial cells proliferation and survival. Also mediates osteoclast-endothelial cell crosstalk in growing bone: produced by osteoclasts and protects the neighboring vascular cells against senescence by promoting rRNA transcription. The protein is Angiogenin (ANG) of Macaca mulatta (Rhesus macaque).